The sequence spans 376 residues: N-acetyldiaminopimelate deacetylase (376 aa).

Aspartate 69 is an active-site residue. Glutamate 128 acts as the Proton acceptor in catalysis.

Belongs to the peptidase M20A family. N-acetyldiaminopimelate deacetylase subfamily.

The catalysed reaction is N-acetyl-(2S,6S)-2,6-diaminopimelate + H2O = (2S,6S)-2,6-diaminopimelate + acetate. It functions in the pathway amino-acid biosynthesis; L-lysine biosynthesis via DAP pathway; LL-2,6-diaminopimelate from (S)-tetrahydrodipicolinate (acetylase route): step 3/3. Functionally, catalyzes the conversion of N-acetyl-diaminopimelate to diaminopimelate and acetate. In Streptococcus pneumoniae serotype 4 (strain ATCC BAA-334 / TIGR4), this protein is N-acetyldiaminopimelate deacetylase.